Reading from the N-terminus, the 505-residue chain is Probable RNA exonuclease NGL3 (505 aa).

Disordered stretches follow at residues 1–75 and 334–369; these read MDSQ…FPTP and RNGEESDQDDEECDEKSRGEGHSDQPQNPKPESFTA. Residues 10–23 are compositionally biased toward polar residues; the sequence is SPSQKESSSTSGLV. Basic and acidic residues predominate over residues 36-54; the sequence is HRDQLSVDQIKKIREERAQ. Position 62 is a phosphoserine (S62). Residues 338-347 show a composition bias toward acidic residues; it reads ESDQDDEECD.

Belongs to the CCR4/nocturin family.

This Saccharomyces cerevisiae (strain ATCC 204508 / S288c) (Baker's yeast) protein is Probable RNA exonuclease NGL3 (NGL3).